The following is a 926-amino-acid chain: Protein transport protein SEC24-2 (926 aa).

The segment at 1–54 is disordered; it reads MSHHKKRVYPQAQAQYGQSATPLQQPAQLVPPQDPAAAGMSYAQMGMPPQGAAA. The span at 20–54 shows a compositional bias: low complexity; that stretch reads ATPLQQPAQLVPPQDPAAAGMSYAQMGMPPQGAAA. Zn(2+) is bound by residues cysteine 231, cysteine 234, cysteine 253, and cysteine 256. The tract at residues 231-256 is zinc finger-like; that stretch reads CRRCRSYMNPFITFIEQGRRWRCNFC.

It belongs to the SEC23/SEC24 family. SEC24 subfamily. As to quaternary structure, the COPII coat is composed of at least 5 proteins: the SEC23/24 complex, the SEC13/31 complex, and the protein SAR1. Golgi apparatus membrane; Peripheral membrane protein; Cytoplasmic side.

Its subcellular location is the cytoplasm. It is found in the cytoplasmic vesicle. The protein resides in the COPII-coated vesicle membrane. It localises to the endoplasmic reticulum membrane. The protein localises to the golgi apparatus membrane. Component of the coat protein complex II (COPII) which promotes the formation of transport vesicles from the endoplasmic reticulum (ER). The coat has two main functions, the physical deformation of the endoplasmic reticulum membrane into vesicles and the selection of cargo molecules. This Saccharomyces uvarum (strain ATCC 76518 / CBS 7001 / CLIB 283 / NBRC 10550 / MCYC 623 / NCYC 2669 / NRRL Y-11845) (Yeast) protein is Protein transport protein SEC24-2 (SEC242).